A 396-amino-acid polypeptide reads, in one-letter code: Protein NDRG1-B (396 aa).

The interval 326–396 is disordered; sequence RSRTGSAASS…NTPKSMEVSC (71 aa). The span at 327–340 shows a compositional bias: low complexity; the sequence is SRTGSAASSSSQDG. 4 repeat units span residues 340-349, 350-359, 360-369, and 370-379. The tract at residues 340–379 is 4 X 10 AA tandem repeats of G-[NS]-R-S-R-[AS]-[HQ]-T-[DGN]-[DET]; it reads GNRSRSHTNEGSRSRSQTGDGNRSRAHTGDGNRSRSHTDT. Over residues 366–377 the composition is skewed to basic and acidic residues; the sequence is HTGDGNRSRSHT. The span at 378-390 shows a compositional bias: polar residues; sequence DTNNVNSDHNTPK.

This sequence belongs to the NDRG family.

Functionally, may be involved in pronephros development, after specification of the pronephros. The sequence is that of Protein NDRG1-B (ndrg1-b) from Xenopus laevis (African clawed frog).